We begin with the raw amino-acid sequence, 942 residues long: Alpha,alpha-trehalose-phosphate synthase [UDP-forming] 1 (942 aa).

The segment at 28–57 (REKRKSNRARNPNDVAGSSENSENDLRLEG) is disordered. A glycosyltransferase region spans residues 92-559 (QRLLVVANRL…AETFVSELND (468 aa)). Residues 815–892 (DMPAIARSRP…LGNSRRPSPE (78 aa)) form a disordered region. Composition is skewed to low complexity over residues 821–833 (RSRPSSDSGAKSS) and 841–867 (SKSTHNNNKSGSKSSSSSNSNNNNKSS). Polar residues predominate over residues 879-888 (SNHSLGNSRR).

This sequence in the N-terminal section; belongs to the glycosyltransferase 20 family. The protein in the C-terminal section; belongs to the trehalose phosphatase family. Expressed in seedlings, leaves, roots, stems, flowers and siliques.

The protein localises to the vacuole. The protein resides in the secreted. It is found in the cell wall. Its subcellular location is the cytoplasm. It catalyses the reaction D-glucose 6-phosphate + UDP-alpha-D-glucose = alpha,alpha-trehalose 6-phosphate + UDP + H(+). In terms of biological role, required for normal embryo development, vegetative growth and transition to flowering. Regulates embryo growth, cell wall deposition, starch and sucrose degradation, but not cell differentiation. Involved in the regulation of glucose sensing and signaling genes during plant development. The protein is Alpha,alpha-trehalose-phosphate synthase [UDP-forming] 1 of Arabidopsis thaliana (Mouse-ear cress).